A 236-amino-acid polypeptide reads, in one-letter code: 1-(5-phosphoribosyl)-5-[(5-phosphoribosylamino)methylideneamino] imidazole-4-carboxamide isomerase (236 aa).

The active-site Proton acceptor is aspartate 8. Aspartate 129 serves as the catalytic Proton donor.

Belongs to the HisA/HisF family.

The protein localises to the cytoplasm. It carries out the reaction 1-(5-phospho-beta-D-ribosyl)-5-[(5-phospho-beta-D-ribosylamino)methylideneamino]imidazole-4-carboxamide = 5-[(5-phospho-1-deoxy-D-ribulos-1-ylimino)methylamino]-1-(5-phospho-beta-D-ribosyl)imidazole-4-carboxamide. It functions in the pathway amino-acid biosynthesis; L-histidine biosynthesis; L-histidine from 5-phospho-alpha-D-ribose 1-diphosphate: step 4/9. The sequence is that of 1-(5-phosphoribosyl)-5-[(5-phosphoribosylamino)methylideneamino] imidazole-4-carboxamide isomerase from Methanocorpusculum labreanum (strain ATCC 43576 / DSM 4855 / Z).